A 452-amino-acid polypeptide reads, in one-letter code: GTPase Obg (452 aa).

The 158-residue stretch at 1–158 folds into the Obg domain; it reads MFIDRAKIYV…KWIVLELKVM (158 aa). Disordered stretches follow at residues 66-87 and 117-143; these read GKRG…DKVI and AEGG…SEDG. The 180-residue stretch at 159-338 folds into the OBG-type G domain; sequence AEVGLIGYPN…LLDFVAEKVA (180 aa). GTP-binding positions include 165-172, 190-194, 212-215, 282-285, and 319-321; these read GYPNVGKS, FTTLN, DIPG, NKMD, and SAA. S172 and T192 together coordinate Mg(2+). Residues 376–452 form the OCT domain; the sequence is IEEKPKSDFG…KIGNVEFEYQ (77 aa).

This sequence belongs to the TRAFAC class OBG-HflX-like GTPase superfamily. OBG GTPase family. In terms of assembly, monomer. It depends on Mg(2+) as a cofactor.

The protein resides in the cytoplasm. In terms of biological role, an essential GTPase which binds GTP, GDP and possibly (p)ppGpp with moderate affinity, with high nucleotide exchange rates and a fairly low GTP hydrolysis rate. Plays a role in control of the cell cycle, stress response, ribosome biogenesis and in those bacteria that undergo differentiation, in morphogenesis control. The polypeptide is GTPase Obg (Natranaerobius thermophilus (strain ATCC BAA-1301 / DSM 18059 / JW/NM-WN-LF)).